Consider the following 227-residue polypeptide: PKHD-type hydroxylase Veis_3084 (227 aa).

Residues 27–51 are disordered; that stretch reads DDGKDSAGTQARQAKNNQQLPRDSE. Polar residues predominate over residues 33 to 47; sequence AGTQARQAKNNQQLP. The 102-residue stretch at 78-179 folds into the Fe2OG dioxygenase domain; the sequence is RVFPPRVNRY…RMACFFWVES (102 aa). His97, Asp99, and His160 together coordinate Fe cation. Arg170 contacts 2-oxoglutarate.

Fe(2+) serves as cofactor. It depends on L-ascorbate as a cofactor.

The chain is PKHD-type hydroxylase Veis_3084 from Verminephrobacter eiseniae (strain EF01-2).